The chain runs to 146 residues: Hemoglobin subunit beta (146 aa).

Val1 carries the N-acetylvaline modification. Residues 2-146 (HLTAEEKAAV…VANALAHKYH (145 aa)) form the Globin domain. Thr12 carries the phosphothreonine modification. Ser44 is modified (phosphoserine). Position 59 is an N6-acetyllysine (Lys59). Residue His63 coordinates heme b. At Lys82 the chain carries N6-acetyllysine. His92 contributes to the heme b binding site. Cys93 carries the post-translational modification S-nitrosocysteine. Position 144 is an N6-acetyllysine (Lys144).

Belongs to the globin family. Heterotetramer of two alpha chains and two beta chains. As to expression, red blood cells.

Functionally, involved in oxygen transport from the lung to the various peripheral tissues. In Mellivora capensis (Ratel), this protein is Hemoglobin subunit beta (HBB).